The following is a 125-amino-acid chain: Small ribosomal subunit protein uS13 (125 aa).

Belongs to the universal ribosomal protein uS13 family. In terms of assembly, part of the 30S ribosomal subunit. Forms a loose heterodimer with protein S19. Forms two bridges to the 50S subunit in the 70S ribosome.

In terms of biological role, located at the top of the head of the 30S subunit, it contacts several helices of the 16S rRNA. In the 70S ribosome it contacts the 23S rRNA (bridge B1a) and protein L5 of the 50S subunit (bridge B1b), connecting the 2 subunits; these bridges are implicated in subunit movement. Contacts the tRNAs in the A and P-sites. This chain is Small ribosomal subunit protein uS13, found in Rickettsia felis (strain ATCC VR-1525 / URRWXCal2) (Rickettsia azadi).